The primary structure comprises 140 residues: Large ribosomal subunit protein uL11 (140 aa).

It belongs to the universal ribosomal protein uL11 family. Part of the ribosomal stalk of the 50S ribosomal subunit. Interacts with L10 and the large rRNA to form the base of the stalk. L10 forms an elongated spine to which L12 dimers bind in a sequential fashion forming a multimeric L10(L12)X complex. One or more lysine residues are methylated.

Its function is as follows. Forms part of the ribosomal stalk which helps the ribosome interact with GTP-bound translation factors. The polypeptide is Large ribosomal subunit protein uL11 (Desulforapulum autotrophicum (strain ATCC 43914 / DSM 3382 / VKM B-1955 / HRM2) (Desulfobacterium autotrophicum)).